Here is a 31-residue protein sequence, read N- to C-terminus: Cyclotide mden-L (31 aa).

The segment at residues 1–31 (GSIPCGESCVYIPCISAVLGCSCKNKVCYRN) is a cross-link (cyclopeptide (Gly-Asn)). Disulfide bonds link C5-C21, C9-C23, and C14-C28.

This sequence belongs to the cyclotide family. Bracelet subfamily. Post-translationally, this is a cyclic peptide.

In terms of biological role, probably participates in a plant defense mechanism. The polypeptide is Cyclotide mden-L (Melicytus dentatus (Tree violet)).